Consider the following 469-residue polypeptide: Tetratricopeptide repeat protein 38 (469 aa).

3 TPR repeats span residues 107-140 (REMLHVAAVETFANGNLPKAADLWERILQNHPTD), 179-212 (SYVKGMYSFGLLETNFYDQALKVAKEALAVDQTD), and 251-284 (CHVYWHWALYFIEKGDYEAALTLYDNHIAPQCFA).

This sequence belongs to the TTC38 family.

The sequence is that of Tetratricopeptide repeat protein 38 (ttc38) from Xenopus tropicalis (Western clawed frog).